The chain runs to 108 residues: Large ribosomal subunit protein uL24 (108 aa).

The protein belongs to the universal ribosomal protein uL24 family. Part of the 50S ribosomal subunit.

Functionally, one of two assembly initiator proteins, it binds directly to the 5'-end of the 23S rRNA, where it nucleates assembly of the 50S subunit. Its function is as follows. One of the proteins that surrounds the polypeptide exit tunnel on the outside of the subunit. The sequence is that of Large ribosomal subunit protein uL24 from Geobacter sulfurreducens (strain ATCC 51573 / DSM 12127 / PCA).